Here is a 283-residue protein sequence, read N- to C-terminus: 5'-nucleotidase SurE (283 aa).

Residues aspartate 14, aspartate 15, serine 47, and asparagine 105 each contribute to the a divalent metal cation site.

It belongs to the SurE nucleotidase family. It depends on a divalent metal cation as a cofactor.

The protein localises to the cytoplasm. It carries out the reaction a ribonucleoside 5'-phosphate + H2O = a ribonucleoside + phosphate. Nucleotidase that shows phosphatase activity on nucleoside 5'-monophosphates. This is 5'-nucleotidase SurE from Chlamydia trachomatis serovar L2 (strain ATCC VR-902B / DSM 19102 / 434/Bu).